A 328-amino-acid polypeptide reads, in one-letter code: GTPase Obg (328 aa).

Residues 2–160 (YNFKDSVNIT…LSVRLELFLV (159 aa)) form the Obg domain. One can recognise an OBG-type G domain in the interval 161–326 (ADIGLVGLPN…LIKEFFILAK (166 aa)). Residues 167–174 (GLPNAGKS), 192–196 (FTTKI), 213–216 (DIPG), 280–283 (NKLD), and 307–309 (SIY) each bind GTP. The Mg(2+) site is built by serine 174 and threonine 194.

This sequence belongs to the TRAFAC class OBG-HflX-like GTPase superfamily. OBG GTPase family. As to quaternary structure, monomer. Mg(2+) is required as a cofactor.

The protein resides in the cytoplasm. Functionally, an essential GTPase which binds GTP, GDP and possibly (p)ppGpp with moderate affinity, with high nucleotide exchange rates and a fairly low GTP hydrolysis rate. Plays a role in control of the cell cycle, stress response, ribosome biogenesis and in those bacteria that undergo differentiation, in morphogenesis control. The chain is GTPase Obg from Borreliella burgdorferi (strain ATCC 35210 / DSM 4680 / CIP 102532 / B31) (Borrelia burgdorferi).